The sequence spans 75 residues: Calhepatin (75 aa).

N-acetylserine is present on S1. EF-hand domains follow at residues 2–37 (ADEQ…VHPK) and 38–73 (VSRN…LADL). Ca(2+) is bound by residues D15, D17, S19, T21, E26, D51, N53, D55, Q57, and E62.

Monomer and homodimer. Liver, and to a much lower level intestine.

In terms of biological role, binds both calcium and copper, but not zinc. May be involved in calcium signal transduction. The protein is Calhepatin of Lepidosiren paradoxus (South American lungfish).